We begin with the raw amino-acid sequence, 76 residues long: MDILKKSLFLVLFLGLISLSFCEEEKRENEDEEEQEDDEQSEEKRGLWKSLLKNVGKAAGKAALNAVTDMVNQGEQ.

The N-terminal stretch at 1-22 (MDILKKSLFLVLFLGLISLSFC) is a signal peptide. Positions 23–45 (EEEKRENEDEEEQEDDEQSEEKR) are excised as a propeptide. The interval 25 to 45 (EKRENEDEEEQEDDEQSEEKR) is disordered. The segment covering 30 to 41 (EDEEEQEDDEQS) has biased composition (acidic residues). Position 73 is a glutamine amide (Gln-73). A propeptide spanning residues 75-76 (EQ) is cleaved from the precursor.

Belongs to the frog skin active peptide (FSAP) family. Dermaseptin subfamily. As to expression, expressed by the skin glands.

The protein resides in the secreted. Antimicrobial peptide. The protein is Dermaseptin-S7 of Phyllomedusa sauvagei (Sauvage's leaf frog).